The following is a 147-amino-acid chain: D-aminoacyl-tRNA deacylase (147 aa).

The Gly-cisPro motif, important for rejection of L-amino acids signature appears at 137-138 (GP).

The protein belongs to the DTD family. As to quaternary structure, homodimer.

The protein resides in the cytoplasm. It catalyses the reaction glycyl-tRNA(Ala) + H2O = tRNA(Ala) + glycine + H(+). It carries out the reaction a D-aminoacyl-tRNA + H2O = a tRNA + a D-alpha-amino acid + H(+). Its function is as follows. An aminoacyl-tRNA editing enzyme that deacylates mischarged D-aminoacyl-tRNAs. Also deacylates mischarged glycyl-tRNA(Ala), protecting cells against glycine mischarging by AlaRS. Acts via tRNA-based rather than protein-based catalysis; rejects L-amino acids rather than detecting D-amino acids in the active site. By recycling D-aminoacyl-tRNA to D-amino acids and free tRNA molecules, this enzyme counteracts the toxicity associated with the formation of D-aminoacyl-tRNA entities in vivo and helps enforce protein L-homochirality. The protein is D-aminoacyl-tRNA deacylase of Bacillus pumilus (strain SAFR-032).